The chain runs to 1627 residues: Pappalysin-1 (1627 aa).

Residues Met1 to Ala22 form the signal peptide. A propeptide spanning residues Glu23–Arg81 is cleaved from the precursor. The disordered stretch occupies residues Glu23–Phe99. Residues Ala42–Ala51 are compositionally biased toward low complexity. Intrachain disulfides connect Cys144-Cys235, Cys327-Cys622, Cys332-Cys657, Cys414-Cys428, Cys424-Cys440, Cys457-Cys473, Cys474-Cys485, Cys583-Cys600, Cys587-Cys612, Cys710-Cys878, Cys713-Cys881, Cys753-Cys835, Cys775-Cys781, Cys947-Cys975, Cys960-Cys971, Cys983-Cys990, and Cys999-Cys1011. The segment at Met272–Cys583 is metalloprotease. Asn390 and Asn402 each carry an N-linked (GlcNAc...) asparagine glycan. Residue Asn429 is glycosylated (N-linked (GlcNAc...) asparagine). An N-linked (GlcNAc...) asparagine glycan is attached at Asn480. Residue His562 participates in Zn(2+) binding. Glu563 is a catalytic residue. 2 residues coordinate Zn(2+): His566 and His572. N-linked (GlcNAc...) asparagine glycans are attached at residues Asn601, Asn619, and Asn725. The interval Ser733 to Lys754 is disordered. A compositionally biased stretch (basic and acidic residues) spans Ser739 to Gln751. The N-linked (GlcNAc...) asparagine glycan is linked to Asn825. N-linked (GlcNAc...) asparagine glycosylation occurs at Asn1026. 19 disulfides stabilise this stretch: Cys1036-Cys1070, Cys1051-Cys1139, Cys1192-Cys1205, Cys1215-Cys1269, Cys1227-Cys1238, Cys1242-Cys1280, Cys1285-Cys1329, Cys1300-Cys1310, Cys1314-Cys1342, Cys1346-Cys1399, Cys1362-Cys1373, Cys1377-Cys1410, Cys1415-Cys1458, Cys1428-Cys1438, Cys1442-Cys1471, Cys1478-Cys1539, Cys1492-Cys1502, Cys1506-Cys1554, and Cys1558-Cys1576. Sushi domains follow at residues Thr1213–Pro1282, Val1283–Leu1344, Met1345–Pro1412, Val1413–Glu1473, and Gly1476–Lys1556. N-linked (GlcNAc...) asparagine glycans are attached at residues Asn1222 and Asn1226. N-linked (GlcNAc...) asparagine glycosylation is present at Asn1323. Asn1465 is a glycosylation site (N-linked (GlcNAc...) asparagine). Asn1519 carries N-linked (GlcNAc...) asparagine glycosylation.

This sequence belongs to the peptidase M43B family. As to quaternary structure, homodimer; disulfide-linked. In pregnancy serum, predominantly found as a disulfide-linked 2:2 heterotetramer with the proform of PRG2. Requires Zn(2+) as cofactor. There appear to be no free sulfhydryl groups. High levels in placenta and pregnancy serum. In placenta, expressed in X cells in septa and anchoring villi, and in syncytiotrophoblasts in the chorionic villi. Lower levels are found in a variety of other tissues including kidney, myometrium, endometrium, ovaries, breast, prostate, bone marrow, colon, fibroblasts and osteoblasts.

Its subcellular location is the secreted. It carries out the reaction Cleavage of the 135-Met-|-Lys-136 bond in insulin-like growth factor binding protein (IGFBP)-4, and the 143-Ser-|-Lys-144 bond in IGFBP-5.. With respect to regulation, inhibited by complexation with the proform of PRG2. Functionally, metalloproteinase which specifically cleaves IGFBP-4 and IGFBP-5, resulting in release of bound IGF. Cleavage of IGFBP-4 is dramatically enhanced by the presence of IGF, whereas cleavage of IGFBP-5 is slightly inhibited by the presence of IGF. The polypeptide is Pappalysin-1 (PAPPA) (Homo sapiens (Human)).